The sequence spans 688 residues: Elongation factor G (688 aa).

Positions 8-282 (DKFRNFGIMA…GVVDYLPSPL (275 aa)) constitute a tr-type G domain. Residues 17–24 (AHIDAGKT), 81–85 (DTPGH), and 135–138 (NKMD) each bind GTP.

This sequence belongs to the TRAFAC class translation factor GTPase superfamily. Classic translation factor GTPase family. EF-G/EF-2 subfamily.

The protein localises to the cytoplasm. In terms of biological role, catalyzes the GTP-dependent ribosomal translocation step during translation elongation. During this step, the ribosome changes from the pre-translocational (PRE) to the post-translocational (POST) state as the newly formed A-site-bound peptidyl-tRNA and P-site-bound deacylated tRNA move to the P and E sites, respectively. Catalyzes the coordinated movement of the two tRNA molecules, the mRNA and conformational changes in the ribosome. This chain is Elongation factor G, found in Clostridium botulinum (strain Eklund 17B / Type B).